The sequence spans 339 residues: Retinol dehydrogenase 10-A (339 aa).

Residues 3–23 traverse the membrane as a helical; Signal-anchor segment; it reads IFVEFFLVMLKVCWAIVMAGF. 40-64 contributes to the NADP(+) binding site; sequence VITGAGGGLGRLFAKEFARRRATLV. Residue S195 participates in substrate binding. Y208 functions as the Proton acceptor in the catalytic mechanism.

The protein belongs to the short-chain dehydrogenases/reductases (SDR) family.

Its subcellular location is the microsome membrane. The protein localises to the endoplasmic reticulum membrane. It catalyses the reaction all-trans-retinol + NADP(+) = all-trans-retinal + NADPH + H(+). It functions in the pathway cofactor metabolism; retinol metabolism. Retinol dehydrogenase with a clear preference for NADP. Converts all-trans-retinol to all-trans-retinal. Has no detectable activity towards 11-cis-retinol, 9-cis-retinol and 13-cis-retinol. This is Retinol dehydrogenase 10-A (rdh10a) from Danio rerio (Zebrafish).